Here is a 483-residue protein sequence, read N- to C-terminus: Betaine aldehyde dehydrogenase (483 aa).

2 residues coordinate K(+): isoleucine 27 and aspartate 93. 149-151 provides a ligand contact to NAD(+); the sequence is GAW. Lysine 161 (charge relay system) is an active-site residue. 175–178 contributes to the NAD(+) binding site; it reads KPSE. K(+) is bound at residue valine 179. 228–231 is a binding site for NAD(+); sequence SVPT. Residue valine 243 coordinates K(+). Glutamate 249 functions as the Proton acceptor in the catalytic mechanism. Glycine 251, cysteine 283, and glutamate 380 together coordinate NAD(+). Residue cysteine 283 is the Nucleophile of the active site. Residue cysteine 283 is modified to Cysteine sulfenic acid (-SOH). K(+) is bound by residues lysine 450 and glycine 453. Glutamate 457 functions as the Charge relay system in the catalytic mechanism.

The protein belongs to the aldehyde dehydrogenase family. In terms of assembly, dimer of dimers. Requires K(+) as cofactor.

The enzyme catalyses betaine aldehyde + NAD(+) + H2O = glycine betaine + NADH + 2 H(+). It functions in the pathway amine and polyamine biosynthesis; betaine biosynthesis via choline pathway; betaine from betaine aldehyde: step 1/1. In terms of biological role, involved in the biosynthesis of the osmoprotectant glycine betaine. Catalyzes the irreversible oxidation of betaine aldehyde to the corresponding acid. The sequence is that of Betaine aldehyde dehydrogenase from Cereibacter sphaeroides (strain KD131 / KCTC 12085) (Rhodobacter sphaeroides).